Reading from the N-terminus, the 198-residue chain is Synaptobrevin homolog YKT6-B (198 aa).

Residues Val8–Leu127 form the Longin domain. The 61-residue stretch at Pro138–Met198 folds into the v-SNARE coiled-coil homology domain. The S-palmitoyl cysteine moiety is linked to residue Cys194. At Cys195 the chain carries Cysteine methyl ester. Residue Cys195 is the site of S-farnesyl cysteine attachment. A propeptide spans Asp196–Met198 (removed in mature form).

It belongs to the synaptobrevin family. In terms of processing, palmitoylated; catalyzes its own palmitoylation. Palmitoylation is required for Golgi targeting. Farnesylation is required for Golgi targeting.

The protein resides in the cytoplasm. The protein localises to the cytosol. Its subcellular location is the cytoplasmic vesicle membrane. It localises to the golgi apparatus membrane. Vesicular soluble NSF attachment protein receptor (v-SNARE) mediating vesicle docking and fusion to a specific acceptor cellular compartment. Functions in endoplasmic reticulum to Golgi transport; as part of a SNARE complex composed of GOSR1, GOSR2 and STX5. Functions in early/recycling endosome to TGN transport; as part of a SNARE complex composed of BET1L, GOSR1 and STX5. Has a S-palmitoyl transferase activity. The protein is Synaptobrevin homolog YKT6-B (ykt6-b) of Xenopus laevis (African clawed frog).